The following is a 427-amino-acid chain: Putative tyrosine recombinase XerC (427 aa).

Residues methionine 1–isoleucine 81 enclose the Core-binding (CB) domain. Residues arginine 116 to histidine 305 form the Tyr recombinase domain. Active-site residues include arginine 156, lysine 183, histidine 256, arginine 259, and histidine 283. The active-site O-(3'-phospho-DNA)-tyrosine intermediate is tyrosine 292. 2 disordered regions span residues serine 323 to threonine 384 and arginine 401 to alanine 427. Residues alanine 350–glutamine 362 are compositionally biased toward basic and acidic residues. Positions alanine 402 to serine 413 are enriched in low complexity.

Belongs to the 'phage' integrase family.

The protein resides in the cytoplasm. In terms of biological role, site-specific tyrosine recombinase, which acts by catalyzing the cutting and rejoining of the recombining DNA molecules. In Pseudomonas aeruginosa, this protein is Putative tyrosine recombinase XerC.